Here is a 79-residue protein sequence, read N- to C-terminus: Cell division protein ZapB (79 aa).

Residues 1 to 78 (MSLEALDQLQ…LNSLLGKMDD (78 aa)) are a coiled coil.

It belongs to the ZapB family. In terms of assembly, homodimer. The ends of the coiled-coil dimer bind to each other, forming polymers. Interacts with FtsZ.

The protein localises to the cytoplasm. In terms of biological role, non-essential, abundant cell division factor that is required for proper Z-ring formation. It is recruited early to the divisome by direct interaction with FtsZ, stimulating Z-ring assembly and thereby promoting cell division earlier in the cell cycle. Its recruitment to the Z-ring requires functional FtsA or ZipA. The protein is Cell division protein ZapB of Hamiltonella defensa subsp. Acyrthosiphon pisum (strain 5AT).